Consider the following 586-residue polypeptide: 3-hydroxy-3-methylglutaryl-coenzyme A reductase 3 (586 aa).

Transmembrane regions (helical) follow at residues 36-59 (PSDY…FFSV) and 87-107 (ALIC…IGFV). The interval 108–170 (HSFSRASTDS…STTTTSTLSD (63 aa)) is linker. 2 catalytic regions span residues 171–586 (DDEQ…KITF) and 172–586 (DEQI…KITF). Active-site charge relay system residues include E265, K397, and D473. Residue H571 is the Proton donor of the active site. The N-linked (GlcNAc...) asparagine glycan is linked to N575.

It belongs to the HMG-CoA reductase family.

The protein resides in the endoplasmic reticulum membrane. It is found in the mitochondrion membrane. Its subcellular location is the plastid membrane. The catalysed reaction is (R)-mevalonate + 2 NADP(+) + CoA = (3S)-3-hydroxy-3-methylglutaryl-CoA + 2 NADPH + 2 H(+). Its pathway is metabolic intermediate biosynthesis; (R)-mevalonate biosynthesis; (R)-mevalonate from acetyl-CoA: step 3/3. Its function is as follows. Catalyzes the synthesis of mevalonate. The specific precursor of all isoprenoid compounds present in plants. The polypeptide is 3-hydroxy-3-methylglutaryl-coenzyme A reductase 3 (HMGR3) (Hevea brasiliensis (Para rubber tree)).